A 531-amino-acid polypeptide reads, in one-letter code: ATP synthase subunit beta (531 aa).

Residues 1-48 (MVKAVTSSKETAKVEKKKSAPRSGVKKAVSKSQAGVKDSSSPVHKSSK) are disordered. A compositionally biased stretch (basic residues) spans 19-29 (SAPRSGVKKAV). Residues 30 to 44 (SKSQAGVKDSSSPVH) are compositionally biased toward polar residues. 203–210 (GGAGVGKT) lines the ATP pocket.

It belongs to the ATPase alpha/beta chains family. As to quaternary structure, F-type ATPases have 2 components, CF(1) - the catalytic core - and CF(0) - the membrane proton channel. CF(1) has five subunits: alpha(3), beta(3), gamma(1), delta(1), epsilon(1). CF(0) has three main subunits: a(1), b(2) and c(9-12). The alpha and beta chains form an alternating ring which encloses part of the gamma chain. CF(1) is attached to CF(0) by a central stalk formed by the gamma and epsilon chains, while a peripheral stalk is formed by the delta and b chains.

It is found in the cell inner membrane. It catalyses the reaction ATP + H2O + 4 H(+)(in) = ADP + phosphate + 5 H(+)(out). Produces ATP from ADP in the presence of a proton gradient across the membrane. The catalytic sites are hosted primarily by the beta subunits. This Bartonella henselae (strain ATCC 49882 / DSM 28221 / CCUG 30454 / Houston 1) (Rochalimaea henselae) protein is ATP synthase subunit beta.